The primary structure comprises 65 residues: Temporin-SN1 (65 aa).

Residues 1–22 (MFTTKKSLLLLFFLGTINLSLC) form the signal peptide. Residues 23 to 44 (QEERNAEEERRDGDDEGGVEVQ) constitute a propeptide, removed in mature form. K65 is modified (lysine amide).

The protein belongs to the frog skin active peptide (FSAP) family. Temporin subfamily. In terms of tissue distribution, expressed by the skin glands.

Its subcellular location is the secreted. Functionally, antimicrobial peptide. Active against a variety of Gram-positive bacterial strains. Not active against Gram-negative bacteria and against fungi. Shows hemolytic activity against human erythrocytes. This Sylvirana spinulosa (Fine-spined frog) protein is Temporin-SN1.